The sequence spans 330 residues: MLLLINVILTLWVSCANGQVKPCDFPDIKHGGLFHENMRRPYFPVAVGKYYSYYCDEHFETPSGSYWDYIHCTQNGWSPAVPCLRKCYFPYLENGYNQNYGRKFVQGNSTEVACHPGYGLPKAQTTVTCTEKGWSPTPRCIRVRTCSKSDIEIENGFISESSSIYILNKEIQYKCKPGYATADGNSSGSITCLQNGWSAQPICINSSEKCGPPPPISNGDTTSFLLKVYVPQSRVEYQCQPYYELQGSNYVTCSNGEWSEPPRCIHPCIITEENMNKNNIKLKGRSDRKYYAKTGDTIEFMCKLGYNANTSILSFQAVCREGIVEYPRCE.

The signal sequence occupies residues 1–18 (MLLLINVILTLWVSCANG). Sushi domains lie at 22 to 84 (PCDF…VPCL), 85 to 142 (RKCY…RCIR), 144 to 205 (RTCS…ICIN), 208 to 266 (EKCG…RCIH), and 267 to 330 (PCII…PRCE). Disulfide bonds link C23/C72, C55/C83, C87/C129, C114/C140, C146/C192, and C175/C203. A glycan (N-linked (GlcNAc...) asparagine) is linked at N108. 2 N-linked (GlcNAc...) asparagine glycosylation sites follow: N185 and N205. Disulfide bonds link C210-C253, C239-C264, C268-C319, and C302-C329. Residue N309 is glycosylated (N-linked (GlcNAc...) asparagine).

In terms of tissue distribution, expressed by the liver and secreted in plasma.

It is found in the secreted. In terms of biological role, might be involved in complement regulation. The sequence is that of Complement factor H-related protein 3 (CFHR3) from Homo sapiens (Human).